The following is a 776-amino-acid chain: Glucocorticoid receptor (776 aa).

A compositionally biased stretch (polar residues) spans 1–11; that stretch reads MDSKESLTSPS. The interval 1–25 is disordered; sequence MDSKESLTSPSEEIPSSVHGQERGN. The segment at 1–419 is modulating; that stretch reads MDSKESLTSP…LSAVGPPPKF (419 aa). Threonine 8 carries the phosphothreonine modification. Arginine 23 bears the Omega-N-methylarginine mark. Phosphoserine occurs at positions 45, 113, and 134. Residues 157–178 form a disordered region; sequence PETPSDVSSEQQNLKGQTGTNG. Polar residues predominate over residues 161–174; it reads SDVSSEQQNLKGQT. Residues serine 203, serine 211, and serine 226 each carry the phosphoserine modification. Lysine 258 is covalently cross-linked (Glycyl lysine isopeptide (Lys-Gly) (interchain with G-Cter in SUMO2)). Residue serine 267 is modified to Phosphoserine. Glycyl lysine isopeptide (Lys-Gly) (interchain with G-Cter in SUMO); alternate cross-links involve residues lysine 277 and lysine 293. Glycyl lysine isopeptide (Lys-Gly) (interchain with G-Cter in SUMO2); alternate cross-links involve residues lysine 277 and lysine 293. 2 positions are modified to phosphoserine: serine 307 and serine 404. The segment at residues 417–492 is a DNA-binding region (nuclear receptor); that stretch reads PKFCLVCSDE…AGMNLEARKT (76 aa). Residue lysine 418 forms a Glycyl lysine isopeptide (Lys-Gly) (interchain with G-Cter in ubiquitin) linkage. 2 consecutive NR C4-type zinc fingers follow at residues 420–440 and 456–480; these read CLVC…CGSC and CAGR…YRKC. An N6-acetyllysine mark is found at lysine 479, lysine 491, lysine 493, and lysine 494. Residues 484-776 are interaction with CLOCK; the sequence is GMNLEARKTK…NIKKLLFHQK (293 aa). Residues 486–522 form a hinge region; the sequence is NLEARKTKKKIKGIQQTTTGISQETPENSANKTIVPA. Positions 523-757 constitute an NR LBD domain; it reads TLPQLTPTPV…FPEMLAEIIT (235 aa). Residues 531–696 are interaction with CRY1; sequence PVSLLEVIEP…EIRMTYIKEL (166 aa). Lysine 702 is covalently cross-linked (Glycyl lysine isopeptide (Lys-Gly) (interchain with G-Cter in SUMO)).

The protein belongs to the nuclear hormone receptor family. NR3 subfamily. In terms of assembly, heteromultimeric cytoplasmic complex with HSP90AA1, HSPA1A/HSPA1B, and FKBP5 or another immunophilin such as PPID, STIP1, or the immunophilin homolog PPP5C. Upon ligand binding FKBP5 dissociates from the complex and FKBP4 takes its place, thereby linking the complex to dynein and mediating transport to the nucleus, where the complex dissociates. Probably forms a complex composed of chaperones HSP90 and HSP70, co-chaperones CDC37, PPP5C, TSC1 and client protein TSC2, CDK4, AKT, RAF1 and NR3C1; this complex does not contain co-chaperones STIP1/HOP and PTGES3/p23. Directly interacts with UNC45A. Binds to DNA as a homodimer, and as heterodimer with NR3C2 or the retinoid X receptor. Binds STAT5A and STAT5B homodimers and heterodimers. Interacts with NRIP1, POU2F1, POU2F2 and TRIM28. Interacts with several coactivator complexes, including the SMARCA4 complex, CREBBP/EP300, TADA2L (Ada complex) and p160 coactivators such as NCOA2 and NCOA6. Interaction with BAG1 inhibits transactivation. Interacts with HEXIM1 and TGFB1I1. Interacts with NCOA1. Interacts with NCOA3, SMARCA4, SMARCC1, SMARCD1, and SMARCE1. Interacts with CLOCK, CRY1 and CRY2 in a ligand-dependent fashion. Interacts with CIART. Interacts with RWDD3. Interacts with UBE2I/UBC9 and this interaction is enhanced in the presence of RWDD3. Interacts with GRIP1. Interacts with NR4A3 (via nuclear receptor DNA-binding domain), represses transcription activity of NR4A3 on the POMC promoter Nur response element (NurRE). Directly interacts with PNRC2 to attract and form a complex with UPF1 and DCP1A; the interaction leads to rapid mRNA degradation. Interacts with GSK3B. Interacts with FNIP1 and FNIP2. Interacts (via C-terminus) with NR3C1 (via C-terminus). Interacts with MCM3AP. Interacts (via domain NR LBD) with HSP90AA1 and HSP90AB1. In the absence of hormonal ligand, interacts with TACC1. Acetylation by CLOCK reduces its binding to glucocorticoid response elements and its transcriptional activity. Post-translationally, increased proteasome-mediated degradation in response to glucocorticoids. In terms of processing, phosphorylated in the absence of hormone; becomes hyperphosphorylated in the presence of glucocorticoid. The Ser-203, Ser-226 and Ser-404-phosphorylated forms are mainly cytoplasmic, and the Ser-211-phosphorylated form is nuclear. Phosphorylation at Ser-211 increases transcriptional activity. Phosphorylation at Ser-203, Ser-226 and Ser-404 decreases signaling capacity. Phosphorylation at Ser-404 may protect from glucocorticoid-induced apoptosis. Phosphorylation at Ser-203 and Ser-211 is not required in regulation of chromosome segregation. May be dephosphorylated by PPP5C, attenuates NR3C1 action. Sumoylation at Lys-277 and Lys-293 negatively regulates its transcriptional activity. Sumoylation at Lys-702 positively regulates its transcriptional activity in the presence of RWDD3. Sumoylation at Lys-277 and Lys-293 is dispensable whereas sumoylation at Lys-702 is critical for the stimulatory effect of RWDD3 on its transcriptional activity. Heat shock increases sumoylation in a RWDD3-dependent manner. Post-translationally, ubiquitinated by UBR5, leading to its degradation: UBR5 specifically recognizes and binds ligand-bound NR3C1 when it is not associated with coactivators (NCOAs). In presence of NCOAs, the UBR5-degron is not accessible, preventing its ubiquitination and degradation.

It is found in the cytoplasm. The protein localises to the nucleus. Its subcellular location is the mitochondrion. The protein resides in the cytoskeleton. It localises to the spindle. It is found in the microtubule organizing center. The protein localises to the centrosome. Its subcellular location is the chromosome. The protein resides in the nucleoplasm. Functionally, receptor for glucocorticoids (GC). Has a dual mode of action: as a transcription factor that binds to glucocorticoid response elements (GRE), both for nuclear and mitochondrial DNA, and as a modulator of other transcription factors. Affects inflammatory responses, cellular proliferation and differentiation in target tissues. Involved in chromatin remodeling. Plays a role in rapid mRNA degradation by binding to the 5' UTR of target mRNAs and interacting with PNRC2 in a ligand-dependent manner which recruits the RNA helicase UPF1 and the mRNA-decapping enzyme DCP1A, leading to RNA decay. Could act as a coactivator for STAT5-dependent transcription upon growth hormone (GH) stimulation and could reveal an essential role of hepatic GR in the control of body growth. Mediates glucocorticoid-induced apoptosis. Promotes accurate chromosome segregation during mitosis. May act as a tumor suppressor. May play a negative role in adipogenesis through the regulation of lipolytic and antilipogenic gene expression. This Tupaia belangeri (Common tree shrew) protein is Glucocorticoid receptor (NR3C1).